A 498-amino-acid chain; its full sequence is Glycerol kinase (498 aa).

ADP is bound at residue T12. T12, T13, and S14 together coordinate ATP. T12 serves as a coordination point for sn-glycerol 3-phosphate. R16 lines the ADP pocket. 4 residues coordinate sn-glycerol 3-phosphate: R82, E83, Y135, and D245. R82, E83, Y135, D245, and Q246 together coordinate glycerol. ADP-binding residues include T267 and G310. ATP-binding residues include T267, G310, Q314, and G411. The ADP site is built by G411 and N415.

It belongs to the FGGY kinase family. In terms of assembly, homotetramer and homodimer (in equilibrium).

The catalysed reaction is glycerol + ATP = sn-glycerol 3-phosphate + ADP + H(+). The protein operates within polyol metabolism; glycerol degradation via glycerol kinase pathway; sn-glycerol 3-phosphate from glycerol: step 1/1. Activated by phosphorylation and inhibited by fructose 1,6-bisphosphate (FBP). Key enzyme in the regulation of glycerol uptake and metabolism. Catalyzes the phosphorylation of glycerol to yield sn-glycerol 3-phosphate. The polypeptide is Glycerol kinase (Clostridium botulinum (strain Eklund 17B / Type B)).